We begin with the raw amino-acid sequence, 62 residues long: Large ribosomal subunit protein bL32 (62 aa).

This sequence belongs to the bacterial ribosomal protein bL32 family.

The protein is Large ribosomal subunit protein bL32 of Treponema denticola (strain ATCC 35405 / DSM 14222 / CIP 103919 / JCM 8153 / KCTC 15104).